A 184-amino-acid polypeptide reads, in one-letter code: Large ribosomal subunit protein uL6 (184 aa).

The protein belongs to the universal ribosomal protein uL6 family. Part of the 50S ribosomal subunit.

Functionally, this protein binds to the 23S rRNA, and is important in its secondary structure. It is located near the subunit interface in the base of the L7/L12 stalk, and near the tRNA binding site of the peptidyltransferase center. The protein is Large ribosomal subunit protein uL6 of Desulfurococcus amylolyticus (strain DSM 18924 / JCM 16383 / VKM B-2413 / 1221n) (Desulfurococcus kamchatkensis).